A 215-amino-acid chain; its full sequence is Thiamine-phosphate synthase (215 aa).

Residues 40-44 (QLRIK) and N72 contribute to the 4-amino-2-methyl-5-(diphosphooxymethyl)pyrimidine site. Mg(2+) contacts are provided by D73 and D92. S111 contacts 4-amino-2-methyl-5-(diphosphooxymethyl)pyrimidine. 137-139 (TTT) is a binding site for 2-[(2R,5Z)-2-carboxy-4-methylthiazol-5(2H)-ylidene]ethyl phosphate. K140 is a 4-amino-2-methyl-5-(diphosphooxymethyl)pyrimidine binding site. Residues G169 and 189–190 (VS) each bind 2-[(2R,5Z)-2-carboxy-4-methylthiazol-5(2H)-ylidene]ethyl phosphate.

Belongs to the thiamine-phosphate synthase family. Mg(2+) is required as a cofactor.

It carries out the reaction 2-[(2R,5Z)-2-carboxy-4-methylthiazol-5(2H)-ylidene]ethyl phosphate + 4-amino-2-methyl-5-(diphosphooxymethyl)pyrimidine + 2 H(+) = thiamine phosphate + CO2 + diphosphate. The catalysed reaction is 2-(2-carboxy-4-methylthiazol-5-yl)ethyl phosphate + 4-amino-2-methyl-5-(diphosphooxymethyl)pyrimidine + 2 H(+) = thiamine phosphate + CO2 + diphosphate. The enzyme catalyses 4-methyl-5-(2-phosphooxyethyl)-thiazole + 4-amino-2-methyl-5-(diphosphooxymethyl)pyrimidine + H(+) = thiamine phosphate + diphosphate. The protein operates within cofactor biosynthesis; thiamine diphosphate biosynthesis; thiamine phosphate from 4-amino-2-methyl-5-diphosphomethylpyrimidine and 4-methyl-5-(2-phosphoethyl)-thiazole: step 1/1. Its function is as follows. Condenses 4-methyl-5-(beta-hydroxyethyl)thiazole monophosphate (THZ-P) and 2-methyl-4-amino-5-hydroxymethyl pyrimidine pyrophosphate (HMP-PP) to form thiamine monophosphate (TMP). In Proteus mirabilis (strain HI4320), this protein is Thiamine-phosphate synthase.